We begin with the raw amino-acid sequence, 396 residues long: Major outer membrane porin, serovar A (396 aa).

A signal peptide spans 1-22 (MKKLLKSVLVFAALSSASSLQA).

This sequence belongs to the chlamydial porin (CP) (TC 1.B.2) family. As to quaternary structure, part of a disulfide cross-linked outer membrane complex (COMC) composed of the major outer membrane porin (MOMP), the small cysteine-rich protein (OmcA) and the large cysteine-rich periplasmic protein (OmcB).

The protein resides in the cell outer membrane. In elementary bodies (EBs, the infectious stage, which is able to survive outside the host cell) provides the structural integrity of the outer envelope through disulfide cross-links with the small cysteine-rich protein and the large cysteine-rich periplasmic protein. It has been described in publications as the Sarkosyl-insoluble COMC (Chlamydia outer membrane complex), and serves as the functional equivalent of peptidoglycan. Its function is as follows. Permits diffusion of specific solutes through the outer membrane. This Chlamydia trachomatis protein is Major outer membrane porin, serovar A (ompA).